We begin with the raw amino-acid sequence, 241 residues long: Geranylgeranylglyceryl phosphate synthase (241 aa).

D26 and S52 together coordinate Mg(2+). Sn-glycerol 1-phosphate is bound by residues 172–178 (YFEAGSG), 204–205 (GG), and 226–227 (GT).

It belongs to the GGGP/HepGP synthase family. Group II subfamily. It depends on Mg(2+) as a cofactor.

The protein resides in the cytoplasm. The enzyme catalyses sn-glycerol 1-phosphate + (2E,6E,10E)-geranylgeranyl diphosphate = sn-3-O-(geranylgeranyl)glycerol 1-phosphate + diphosphate. It participates in membrane lipid metabolism; glycerophospholipid metabolism. Prenyltransferase that catalyzes the transfer of the geranylgeranyl moiety of geranylgeranyl diphosphate (GGPP) to the C3 hydroxyl of sn-glycerol-1-phosphate (G1P). This reaction is the first ether-bond-formation step in the biosynthesis of archaeal membrane lipids. The polypeptide is Geranylgeranylglyceryl phosphate synthase (Hyperthermus butylicus (strain DSM 5456 / JCM 9403 / PLM1-5)).